Reading from the N-terminus, the 367-residue chain is Phosphoribosylaminoimidazole-succinocarboxamide synthase (367 aa).

It belongs to the SAICAR synthetase family.

The enzyme catalyses 5-amino-1-(5-phospho-D-ribosyl)imidazole-4-carboxylate + L-aspartate + ATP = (2S)-2-[5-amino-1-(5-phospho-beta-D-ribosyl)imidazole-4-carboxamido]succinate + ADP + phosphate + 2 H(+). The protein operates within purine metabolism; IMP biosynthesis via de novo pathway; 5-amino-1-(5-phospho-D-ribosyl)imidazole-4-carboxamide from 5-amino-1-(5-phospho-D-ribosyl)imidazole-4-carboxylate: step 1/2. This chain is Phosphoribosylaminoimidazole-succinocarboxamide synthase, found in Aliivibrio fischeri (strain ATCC 700601 / ES114) (Vibrio fischeri).